The following is a 303-amino-acid chain: UDP-N-acetylenolpyruvoylglucosamine reductase (303 aa).

The region spanning 27–191 is the FAD-binding PCMH-type domain; that stretch reads VGGPAARLYK…ISAKLQLTPG (165 aa). Arg171 is an active-site residue. Catalysis depends on Ser220, which acts as the Proton donor. Glu291 is a catalytic residue.

Belongs to the MurB family. The cofactor is FAD.

The protein localises to the cytoplasm. The catalysed reaction is UDP-N-acetyl-alpha-D-muramate + NADP(+) = UDP-N-acetyl-3-O-(1-carboxyvinyl)-alpha-D-glucosamine + NADPH + H(+). It functions in the pathway cell wall biogenesis; peptidoglycan biosynthesis. Cell wall formation. The protein is UDP-N-acetylenolpyruvoylglucosamine reductase of Legionella pneumophila (strain Paris).